The following is a 523-amino-acid chain: Ribonuclease Y (523 aa).

A helical transmembrane segment spans residues 7-24 (LSSLASALLAGGGTYLVY). The KH domain maps to 213–279 (LINVVNLPND…TRTIEALVED (67 aa)). In terms of domain architecture, HD spans 339–432 (ALGHSLEVAN…VCAADALSAA (94 aa)).

The protein belongs to the RNase Y family.

The protein localises to the cell membrane. Endoribonuclease that initiates mRNA decay. The chain is Ribonuclease Y from Wolinella succinogenes (strain ATCC 29543 / DSM 1740 / CCUG 13145 / JCM 31913 / LMG 7466 / NCTC 11488 / FDC 602W) (Vibrio succinogenes).